We begin with the raw amino-acid sequence, 239 residues long: Orotidine 5'-phosphate decarboxylase (239 aa).

Residues D10, K33, 60-69 (DLKLYDIPNT), T124, R186, Q195, G215, and R216 each bind substrate. K62 (proton donor) is an active-site residue.

This sequence belongs to the OMP decarboxylase family. Type 1 subfamily. Homodimer.

The enzyme catalyses orotidine 5'-phosphate + H(+) = UMP + CO2. It functions in the pathway pyrimidine metabolism; UMP biosynthesis via de novo pathway; UMP from orotate: step 2/2. Its function is as follows. Catalyzes the decarboxylation of orotidine 5'-monophosphate (OMP) to uridine 5'-monophosphate (UMP). The sequence is that of Orotidine 5'-phosphate decarboxylase from Latilactobacillus sakei subsp. sakei (strain 23K) (Lactobacillus sakei subsp. sakei).